We begin with the raw amino-acid sequence, 250 residues long: Sulfate transporter CysZ (250 aa).

4 helical membrane passes run Phe-27–Phe-47, Phe-64–Phe-84, Phe-150–Phe-170, and Met-210–Val-230.

It belongs to the CysZ family.

The protein localises to the cell inner membrane. High affinity, high specificity proton-dependent sulfate transporter, which mediates sulfate uptake. Provides the sulfur source for the cysteine synthesis pathway. The protein is Sulfate transporter CysZ of Vibrio cholerae serotype O1 (strain ATCC 39315 / El Tor Inaba N16961).